The sequence spans 48 residues: Small, acid-soluble spore protein G (48 aa).

Basic and acidic residues predominate over residues 1 to 16 (MSENRHENEENRRDAA). Positions 1 to 48 (MSENRHENEENRRDAAVAKVQNSGNAKVVVSVNTDQDQAQAQSQDGED) are disordered. The segment covering 35–48 (DQDQAQAQSQDGED) has biased composition (low complexity).

This chain is Small, acid-soluble spore protein G (sspG), found in Bacillus subtilis (strain 168).